A 442-amino-acid polypeptide reads, in one-letter code: D-serine dehydratase (442 aa).

K118 is modified (N6-(pyridoxal phosphate)lysine).

The protein belongs to the serine/threonine dehydratase family. DsdA subfamily. In terms of assembly, monomer. Pyridoxal 5'-phosphate is required as a cofactor.

It catalyses the reaction D-serine = pyruvate + NH4(+). The sequence is that of D-serine dehydratase from Escherichia coli O139:H28 (strain E24377A / ETEC).